The primary structure comprises 146 residues: 3-dehydroquinate dehydratase (146 aa).

Y22 acts as the Proton acceptor in catalysis. 3 residues coordinate substrate: N73, H79, and D86. The Proton donor role is filled by H99. Substrate is bound by residues 100–101 and R110; that span reads IS.

Belongs to the type-II 3-dehydroquinase family. Homododecamer.

The catalysed reaction is 3-dehydroquinate = 3-dehydroshikimate + H2O. The protein operates within metabolic intermediate biosynthesis; chorismate biosynthesis; chorismate from D-erythrose 4-phosphate and phosphoenolpyruvate: step 3/7. Catalyzes a trans-dehydration via an enolate intermediate. The chain is 3-dehydroquinate dehydratase from Prochlorococcus marinus (strain MIT 9515).